The following is a 131-amino-acid chain: Protein Bouncer (131 aa).

Positions 1–26 (MGSLRTRQLFHAALLWLCLPLPLLLC) are cleaved as a signal peptide. 4 disulfides stabilise this stretch: cysteine 31–cysteine 56, cysteine 50–cysteine 74, cysteine 80–cysteine 99, and cysteine 100–cysteine 105. The UPAR/Ly6 domain maps to 31–106 (CYYSPVLEKE…YSCCDWPYCN (76 aa)). The N-linked (GlcNAc...) asparagine glycan is linked to asparagine 65. Residue asparagine 106 is the site of GPI-anchor amidated asparagine attachment. A propeptide spans 107 to 131 (RAVALEPLTAMLVAAAVVACSFCLT) (removed in mature form).

It belongs to the SPACA4/bouncer family. As to quaternary structure, interacts with spermatocyte complex composed of izumo1, spaca6 and tmem81. Expressed in oocytes. Not expressed in testis.

It is found in the cell membrane. Oocyte-expressed fertilization factor that mediates sperm-egg binding and is essential for sperm entry into the egg. Necessary and sufficient to mediate species-specific gamete recognition and fertilization, which is essential for vertebrate species performing external fertilization. External fertilization cannot guarantee that only conspecific sperm reaches the egg by precopulatory mate choice: proteins such as Bouncer can therefore support the selection of conspecific sperm. This chain is Protein Bouncer, found in Oryzias latipes (Japanese rice fish).